A 135-amino-acid chain; its full sequence is Photosystem II extrinsic protein V (135 aa).

Residues cysteine 37, cysteine 40, histidine 41, and histidine 92 each contribute to the heme c site.

This sequence belongs to the cytochrome c family. PsbV subfamily. As to quaternary structure, PSII is composed of 1 copy each of membrane proteins PsbA, PsbB, PsbC, PsbD, PsbE, PsbF, PsbH, PsbI, PsbJ, PsbK, PsbL, PsbM, PsbT, PsbX, PsbY, PsbZ, Psb30/Ycf12, peripheral proteins PsbO, CyanoQ (PsbQ), PsbU, PsbV and a large number of cofactors. It forms dimeric complexes. Heme c serves as cofactor.

The protein resides in the cellular thylakoid membrane. Its function is as follows. One of the extrinsic, lumenal subunits of photosystem II (PSII). PSII is a light-driven water plastoquinone oxidoreductase, using light energy to abstract electrons from H(2)O, generating a proton gradient subsequently used for ATP formation. The extrinsic proteins stabilize the structure of photosystem II oxygen-evolving complex (OEC), the ion environment of oxygen evolution and protect the OEC against heat-induced inactivation. Low-potential cytochrome c that plays a role in the OEC of PSII. This is Photosystem II extrinsic protein V from Microcystis aeruginosa.